The following is a 126-amino-acid chain: C-type natriuretic peptide (126 aa).

Positions 1 to 23 are cleaved as a signal peptide; sequence MHLSQLLACALLLSLLSLRPSEA. Positions 20–71 are disordered; sequence PSEAKPGAPPKVPRTPPGEEVAEPQAAGGGQKKGDKTPGGGGANLKDDRSRL. A propeptide spanning residues 24-73 is cleaved from the precursor; sequence KPGAPPKVPRTPPGEEVAEPQAAGGGQKKGDKTPGGGGANLKDDRSRLLR. The segment covering 26–35 has biased composition (pro residues); that stretch reads GAPPKVPRTP. Gly residues predominate over residues 46–62; the sequence is AGGGQKKGDKTPGGGGA. Residues Cys110 and Cys126 are joined by a disulfide bond.

The protein belongs to the natriuretic peptide family. Degraded by IDE (in vitro).

It is found in the secreted. Hormone which plays a role in endochondral ossification through regulation of cartilaginous growth plate chondrocytes proliferation and differentiation. May also be vasoactive and natriuretic. Acts by specifically binding and stimulating NPR2 to produce cGMP. Binds the clearance receptor NPR3. This chain is C-type natriuretic peptide (NPPC), found in Ovis aries (Sheep).